The primary structure comprises 115 residues: UPF0738 protein SAV1005 (115 aa).

This sequence belongs to the UPF0738 family.

The chain is UPF0738 protein SAV1005 from Staphylococcus aureus (strain Mu50 / ATCC 700699).